Here is a 286-residue protein sequence, read N- to C-terminus: Nucleotide-binding protein APL_0334 (286 aa).

ATP is bound at residue 8–15 (GRSGSGKS). 56–59 (DIRN) provides a ligand contact to GTP.

It belongs to the RapZ-like family.

In terms of biological role, displays ATPase and GTPase activities. The protein is Nucleotide-binding protein APL_0334 of Actinobacillus pleuropneumoniae serotype 5b (strain L20).